We begin with the raw amino-acid sequence, 253 residues long: Imidazole glycerol phosphate synthase subunit HisF (253 aa).

Active-site residues include Asp11 and Asp130.

It belongs to the HisA/HisF family. In terms of assembly, heterodimer of HisH and HisF.

The protein resides in the cytoplasm. The catalysed reaction is 5-[(5-phospho-1-deoxy-D-ribulos-1-ylimino)methylamino]-1-(5-phospho-beta-D-ribosyl)imidazole-4-carboxamide + L-glutamine = D-erythro-1-(imidazol-4-yl)glycerol 3-phosphate + 5-amino-1-(5-phospho-beta-D-ribosyl)imidazole-4-carboxamide + L-glutamate + H(+). It functions in the pathway amino-acid biosynthesis; L-histidine biosynthesis; L-histidine from 5-phospho-alpha-D-ribose 1-diphosphate: step 5/9. Functionally, IGPS catalyzes the conversion of PRFAR and glutamine to IGP, AICAR and glutamate. The HisF subunit catalyzes the cyclization activity that produces IGP and AICAR from PRFAR using the ammonia provided by the HisH subunit. This chain is Imidazole glycerol phosphate synthase subunit HisF, found in Clostridium botulinum (strain Kyoto / Type A2).